The primary structure comprises 781 residues: Catenin beta-1 (781 aa).

Residue Ala2 is modified to N-acetylalanine. Residues 2-23 are interaction with VCL; the sequence is ATQADLMELDMAMEPDRKAAVS. A Phosphoserine; by GSK3-beta; alternate modification is found at Ser23. Residue Ser23 is glycosylated (O-linked (GlcNAc) serine; alternate). Ser29 is subject to Phosphoserine; by GSK3-beta. Phosphoserine; by GSK3-beta and HIPK2 occurs at positions 33 and 37. Residues 34-56 form a disordered region; that stretch reads GIHSGATTTAPSLSGKGNPEEED. Thr41 carries the post-translational modification Phosphothreonine; by GSK3-beta. Ser45 is modified (phosphoserine). Lys49 carries the post-translational modification N6-acetyllysine. A Phosphotyrosine; by PTK6 modification is found at Tyr64. The residue at position 142 (Tyr142) is a Phosphotyrosine; by FYN and PTK6. ARM repeat units lie at residues 151–191, 193–234, 235–276, 277–318, 319–360, 361–389, 400–441, 442–484, 489–530, 531–571, 594–636, and 637–666; these read RAIP…IMRS, QMVS…IFKS, GGIP…VRLA, GGLQ…ILAS, GGPQ…IVEA, GGMQALGLHLTDPSQRLVQNCLWTLRNLS, GLLG…VCQV, GGIE…AQNA, YGLP…LREQ, GAIP…EIVE, NTIP…AEGA, and TAPLTELLHSRNEGVATYAAAVLFRMSEDK. An interaction with BCL9 region spans residues 156–178; that stretch reads LTKLLNDEDQVVVNKAAVMVHQL. The residue at position 191 (Ser191) is a Phosphoserine; by CDK5. The residue at position 246 (Ser246) is a Phosphoserine; by CDK5. 2 positions are modified to phosphotyrosine: Tyr331 and Tyr333. Ser552 is subject to Phosphoserine; by AMPK. Phosphothreonine is present on Thr556. The residue at position 619 (Cys619) is an S-nitrosocysteine. Ser675 is subject to Phosphoserine. The tract at residues 705–781 is disordered; it reads EPLGYRQDDP…NQLAWFDTDL (77 aa). Residues 734 to 745 are compositionally biased toward basic and acidic residues; sequence MMEHEMGGHHPG. Residues 772–781 are interaction with SCRIB; sequence NQLAWFDTDL.

It belongs to the beta-catenin family. In terms of assembly, two separate complex-associated pools are found in the cytoplasm. The majority is present as component of an E-cadherin/ catenin adhesion complex composed of at least E-cadherin/CDH1 and beta-catenin/CTNNB1, and possibly alpha-catenin/CTNNA1; the complex is located to adherens junctions. The stable association of CTNNA1 is controversial as CTNNA1 was shown not to bind to F-actin when assembled in the complex. Alternatively, the CTNNA1-containing complex may be linked to F-actin by other proteins such as LIMA1. Another cytoplasmic pool is part of a large complex containing AXIN1, AXIN2, APC, CSNK1A1 and GSK3B that promotes phosphorylation on N-terminal Ser and Thr residues and ubiquitination of CTNNB1 via BTRC and its subsequent degradation by the proteasome. Wnt-dependent activation of DVL antagonizes the action of GSK3B. When GSK3B activity is inhibited the complex dissociates, CTNNB1 is dephosphorylated and is no longer targeted for destruction. The stabilized protein translocates to the nucleus, where it binds TCF/LEF-1 family members, BCL9, BCL9L and possibly also RUVBL1 and CHD8. Binds CTNNBIP and EP300. CTNNB1 forms a ternary complex with LEF1 and EP300 that is disrupted by CTNNBIP1 binding. Interacts with TAX1BP3 (via the PDZ domain); this interaction inhibits the transcriptional activity of CTNNB1. Interacts with AJAP1, BAIAP1, CARM1, CTNNA3, CXADR and PCDH11Y. Binds NHERF1. Interacts with GLIS2 and SLC30A9. Interacts with XIRP1 and MUC1. Interacts with PTPRU (via the cytoplasmic juxtamembrane domain) and with EMD. Interacts with SCRIB. Interacts with TNIK. Interacts with SESTD1 and TRPC4. Interacts directly with AXIN1; the interaction is regulated by CDK2 phosphorylation of AXIN1. Interacts with CAV1. Interacts with TRPV4. The TRPV4 and CTNNB1 complex can interact with CDH1. Interacts with VCL. Interacts with PTPRJ. Interacts with PKT7. Interacts with FAT1 (via the cytoplasmic domain). Interacts with NANOS1 and NDRG2. Interacts with NEK2, CDK2 and CDK5. Interacts with PTK6. Interacts with SOX7; this interaction may lead to proteasomal degradation of active CTNNB1 and thus inhibition of Wnt/beta-catenin-stimulated transcription. Identified in a complex with HINT1 and MITF. Interacts with FHIT. The CTNNB1 and TCF4 complex interacts with PML. Interacts with FERMT2. Identified in a complex with TCF4 and FERMT2. Interacts with RORA. May interact with P-cadherin/CDH3. Interacts with RAPGEF2. Interacts with RNF220. Interacts with CTNND2. Interacts (via the C-terminal region) with CBY1. The complex composed, at least, of APC, CTNNB1 and GSK3B interacts with JPT1; the interaction requires the inactive form of GSK3B (phosphorylated at 'Ser-9'). Interacts with DLG5. Interacts with FAM53B; promoting translocation to the nucleus. Interacts with TMEM170B. Interacts with AHI1. Interacts with GID8. Component of an cadherin:catenin adhesion complex composed of at least of CDH26, beta-catenin/CTNNB1, alpha-catenin/CTNNA1 and p120 catenin/CTNND1. Forms a complex comprising APPL1, RUVBL2, APPL2, HDAC1 and HDAC2. Interacts with IRF2BPL; mediates the ubiquitination and degradation of CTNNB1. Interacts with LMBR1L and AMFR. Interacts with LMBR1L. Interacts with SOX30; prevents interaction of CTNNB1 with TCF7L2/TCF4 and leads to inhibition of Wnt signaling. Interacts with SOX9; inhibiting CTNNB1 activity by competing with the binding sites of TCF/LEF within CTNNB1, thereby inhibiting the Wnt signaling. Interacts with SPN/CD43 cytoplasmic tail. Interacts (when phosphorylated at Tyr-333) with isoform M2 of PKM (PKM2); promoting transcription activation. Interacts with PKP2 (via HEAD domain). Interacts with CDH1. Interacts (when unphosphorylated) with FLYWCH1, perhaps preventing interaction of CTNNB1 with TCF4, and thereby regulating transcription activation; phosphorylation of CTNNB1 may inhibit the interaction. Interacts (via the central armadillo domains) with probable transcriptional regulator ADNP (via N-terminal region); interaction is direct and stabilizes CTNNB1 by modulating its phosphorylation by glycogen synthase kinase-3 beta GSK3B. Interacts with NR5A2. Interacts with DSG2; the interaction promotes localization of CTNNB1 at cell junctions thus reducing its nuclear localization and subsequent transcription of CTNNB1/TCF-target genes. Phosphorylation by GSK3B requires prior phosphorylation of Ser-45 by another kinase. Phosphorylation proceeds then from Thr-41 to Ser-33. Phosphorylated by NEK2. EGF stimulates tyrosine phosphorylation. Phosphorylated on Ser-33 and Ser-37 by HIPK2. This phosphorylation triggers proteasomal degradation. Phosphorylation at Ser-552 by AMPK promotes stabilization of the protein, enhancing TCF/LEF-mediated transcription. Phosphorylation on Ser-191 and Ser-246 by CDK5. Phosphorylation by CDK2 regulates insulin internalization. Phosphorylation by PTK6 at Tyr-64, Tyr-142, Tyr-331 and/or Tyr-333 with the predominant site at Tyr-64 is not essential for inhibition of transcriptional activity. Phosphorylation by SRC at Tyr-333 promotes interaction with isoform M2 of PKM (PKM2); promoting transcription activation. In terms of processing, ubiquitinated by the SCF(BTRC) E3 ligase complex when phosphorylated by GSK3B, leading to its degradation. Ubiquitinated by a E3 ubiquitin ligase complex containing UBE2D1, SIAH1, CACYBP/SIP, SKP1, APC and TBL1X, leading to its subsequent proteasomal degradation. Ubiquitinated and degraded following interaction with SOX9. Ubiquitinated via 'Lys-11'- and 'Lys-29'-linked ubiquitin chains by UBR5, leading to its stabilization. Post-translationally, S-nitrosylation at Cys-619 within adherens junctions promotes VEGF-induced, NO-dependent endothelial cell permeability by disrupting interaction with E-cadherin, thus mediating disassembly adherens junctions. O-glycosylation at Ser-23 decreases nuclear localization and transcriptional activity, and increases localization to the plasma membrane and interaction with E-cadherin CDH1. In terms of processing, deacetylated at Lys-49 by SIRT1.

It is found in the cytoplasm. Its subcellular location is the nucleus. The protein resides in the cytoskeleton. The protein localises to the cell junction. It localises to the adherens junction. It is found in the cell membrane. Its subcellular location is the microtubule organizing center. The protein resides in the centrosome. The protein localises to the spindle pole. It localises to the synapse. It is found in the cilium basal body. Key downstream component of the canonical Wnt signaling pathway. In the absence of Wnt, forms a complex with AXIN1, AXIN2, APC, CSNK1A1 and GSK3B that promotes phosphorylation on N-terminal Ser and Thr residues and ubiquitination of CTNNB1 via BTRC and its subsequent degradation by the proteasome. In the presence of Wnt ligand, CTNNB1 is not ubiquitinated and accumulates in the nucleus, where it acts as a coactivator for transcription factors of the TCF/LEF family, leading to activate Wnt responsive genes. Also acts as a coactivator for other transcription factors, such as NR5A2. Promotes epithelial to mesenchymal transition/mesenchymal to epithelial transition (EMT/MET) via driving transcription of CTNNB1/TCF-target genes. Involved in the regulation of cell adhesion, as component of an E-cadherin:catenin adhesion complex. Acts as a negative regulator of centrosome cohesion. Involved in the CDK2/PTPN6/CTNNB1/CEACAM1 pathway of insulin internalization. Blocks anoikis of malignant kidney and intestinal epithelial cells and promotes their anchorage-independent growth by down-regulating DAPK2. Disrupts PML function and PML-NB formation by inhibiting RANBP2-mediated sumoylation of PML. Promotes neurogenesis by maintaining sympathetic neuroblasts within the cell cycle. Involved in chondrocyte differentiation via interaction with SOX9: SOX9-binding competes with the binding sites of TCF/LEF within CTNNB1, thereby inhibiting the Wnt signaling. Acts as a positive regulator of odontoblast differentiation during mesenchymal tooth germ formation, via promoting the transcription of differentiation factors such as LEF1, BMP2 and BMP4. Activity is repressed in a MSX1-mediated manner at the bell stage of mesenchymal tooth germ formation which prevents premature differentiation of odontoblasts. This is Catenin beta-1 from Bos taurus (Bovine).